The following is a 600-amino-acid chain: Malto-oligosyltrehalose trehalohydrolase (600 aa).

Positions 1-34 (MTQTQPVTPTPPASFQTQHDPRTRLGATPLPGGA) are disordered. 273-278 (RLDATP) contributes to the substrate binding site. Asp275 acts as the Nucleophile in catalysis. The Proton donor role is filled by Glu308. Substrate contacts are provided by residues 328–332 (DDFHH), Glu376, and 399–404 (HDQIGN).

The protein belongs to the glycosyl hydrolase 13 family. Monomer.

Its subcellular location is the cytoplasm. The enzyme catalyses hydrolysis of (1-&gt;4)-alpha-D-glucosidic linkage in 4-alpha-D-[(1-&gt;4)-alpha-D-glucanosyl]n trehalose to yield trehalose and (1-&gt;4)-alpha-D-glucan.. Its pathway is glycan biosynthesis; trehalose biosynthesis. This is Malto-oligosyltrehalose trehalohydrolase (treZ) from Deinococcus radiodurans (strain ATCC 13939 / DSM 20539 / JCM 16871 / CCUG 27074 / LMG 4051 / NBRC 15346 / NCIMB 9279 / VKM B-1422 / R1).